The chain runs to 311 residues: Lipoyl synthase (311 aa).

Residues Cys55, Cys60, Cys66, Cys81, Cys85, Cys88, and Ser292 each contribute to the [4Fe-4S] cluster site. One can recognise a Radical SAM core domain in the interval Trp67 to Ala281.

This sequence belongs to the radical SAM superfamily. Lipoyl synthase family. It depends on [4Fe-4S] cluster as a cofactor.

It is found in the cytoplasm. The enzyme catalyses [[Fe-S] cluster scaffold protein carrying a second [4Fe-4S](2+) cluster] + N(6)-octanoyl-L-lysyl-[protein] + 2 oxidized [2Fe-2S]-[ferredoxin] + 2 S-adenosyl-L-methionine + 4 H(+) = [[Fe-S] cluster scaffold protein] + N(6)-[(R)-dihydrolipoyl]-L-lysyl-[protein] + 4 Fe(3+) + 2 hydrogen sulfide + 2 5'-deoxyadenosine + 2 L-methionine + 2 reduced [2Fe-2S]-[ferredoxin]. Its pathway is protein modification; protein lipoylation via endogenous pathway; protein N(6)-(lipoyl)lysine from octanoyl-[acyl-carrier-protein]: step 2/2. Functionally, catalyzes the radical-mediated insertion of two sulfur atoms into the C-6 and C-8 positions of the octanoyl moiety bound to the lipoyl domains of lipoate-dependent enzymes, thereby converting the octanoylated domains into lipoylated derivatives. In Mycobacterium bovis (strain ATCC BAA-935 / AF2122/97), this protein is Lipoyl synthase.